The primary structure comprises 588 residues: Phosphatidylinositol-3,5-bisphosphate 3-phosphatase mtm-1 (588 aa).

The region spanning 20-91 (IQESIDLKLL…GQVSRIEKVG (72 aa)) is the GRAM domain. The region spanning 164-543 (GWKIYSAEKE…CGLHVWIDYY (380 aa)) is the Myotubularin phosphatase domain. A 1,2-diacyl-sn-glycero-3-phospho-(1D-myo-inositol-3,5-bisphosphate) is bound by residues N293, N316, and I317. Positions 293, 316, and 317 each coordinate a 1,2-diacyl-sn-glycero-3-phospho-(1D-myo-inositol-3-phosphate). Residue C378 is the Phosphocysteine intermediate of the active site. Residues S379, D380, G381, W382, D383, R384, K420, and R424 each coordinate a 1,2-diacyl-sn-glycero-3-phospho-(1D-myo-inositol-3,5-bisphosphate). The a 1,2-diacyl-sn-glycero-3-phospho-(1D-myo-inositol-3-phosphate) site is built by S379, D380, G381, W382, D383, and R384. Phosphate is bound at residue S379. Phosphate-binding residues include G381, W382, D383, and R384. R424 is a binding site for a 1,2-diacyl-sn-glycero-3-phospho-(1D-myo-inositol-3-phosphate). A coiled-coil region spans residues 563–588 (AQFVDEKKQLLDEIMALDDAAQKLTA).

It belongs to the protein-tyrosine phosphatase family. Non-receptor class myotubularin subfamily. In terms of tissue distribution, expressed in embryo, larva and in adults. Expressed in a few head and tail neurons. Expressed in hypodermis, body wall and pharyngeal muscles, sheath cells, vulva, distal tip cells and coelomocytes.

It is found in the cell membrane. The protein resides in the cell projection. Its subcellular location is the phagocytic cup. It localises to the apical cell membrane. The protein localises to the cytoplasmic granule membrane. It catalyses the reaction a 1,2-diacyl-sn-glycero-3-phospho-(1D-myo-inositol-3,5-bisphosphate) + H2O = a 1,2-diacyl-sn-glycero-3-phospho-(1D-myo-inositol-5-phosphate) + phosphate. The catalysed reaction is a 1,2-diacyl-sn-glycero-3-phospho-(1D-myo-inositol-3-phosphate) + H2O = a 1,2-diacyl-sn-glycero-3-phospho-(1D-myo-inositol) + phosphate. It carries out the reaction 1,2-dioctanoyl-sn-glycero-3-phospho-(1-D-myo-inositol-3-phosphate) + H2O = 1,2-dioctanoyl-sn-glycero-3-phospho-(1D-myo-inositol) + phosphate. Its function is as follows. Lipid phosphatase that specifically dephosphorylates phosphatidylinositol 3-phosphate (PI3P) and phosphatidylinositol 3,5-bisphosphate (PI(3,5)P2). Negatively regulates accumulation of PI3P on intracellular vesicles. Negatively regulates phagocytosis of apoptotic cells probably by limiting the recruitment and/or the activation of ced-5, ced-2 and ced-12 complex. In addition, may positively regulate phagosome maturation by promoting recycling of apoptotic receptor ced-1 back to the plasma membrane. Essential for embryonic and larval development. May promote migration of distal tip cells. The polypeptide is Phosphatidylinositol-3,5-bisphosphate 3-phosphatase mtm-1 (Caenorhabditis elegans).